Reading from the N-terminus, the 71-residue chain is Conotoxin Bu25 (71 aa).

A signal peptide spans 1–21 (MGMRMMVTVFPLVVLATTVVS). Residues 22 to 44 (LRSNRASDGRRGIVNKLNDLVPK) constitute a propeptide that is removed on maturation. Arginine amide is present on arginine 70.

This sequence belongs to the conotoxin A superfamily. In terms of processing, contains 3 disulfide bonds. They are not indicated here, since framework IV presents two different connectivities (I-V, II-III, IV-VI and I-III, II-V, IV-VI). Expressed by the venom duct.

It is found in the secreted. This chain is Conotoxin Bu25, found in Conus bullatus (Bubble cone).